A 133-amino-acid chain; its full sequence is MPISICKHGAPFVVQHENRYGSGASQSSSLSKSIRHISNSHEEIKFISCYSANGACFSNAQMLANASGRPVIGYYGKINKLTASLDNSGRIFRPQHKLAANICYVGNRLLSAPVQLGFGLKHLLTCHSNGNVR.

It localises to the secreted. The protein localises to the host cytoplasm. In terms of biological role, effector proteins function to alter host cell physiology and promote bacterial survival in host tissues. The sequence is that of Secreted effector protein SteB (steB) from Salmonella typhimurium (strain 14028s / SGSC 2262).